We begin with the raw amino-acid sequence, 702 residues long: Polyribonucleotide nucleotidyltransferase (702 aa).

Mg(2+)-binding residues include D485 and D491. The region spanning 552–611 (PKTSTLQIDPEKIRDVIGAGGKVINKIIADTGVKIDIKEDGLVYVSSAESEGVKEAVKII) is the KH domain. In terms of domain architecture, S1 motif spans 621–689 (GEIYLGKVTK…SQGRINLSRK (69 aa)).

It belongs to the polyribonucleotide nucleotidyltransferase family. It depends on Mg(2+) as a cofactor.

It localises to the cytoplasm. The catalysed reaction is RNA(n+1) + phosphate = RNA(n) + a ribonucleoside 5'-diphosphate. Functionally, involved in mRNA degradation. Catalyzes the phosphorolysis of single-stranded polyribonucleotides processively in the 3'- to 5'-direction. This is Polyribonucleotide nucleotidyltransferase from Clostridium perfringens (strain ATCC 13124 / DSM 756 / JCM 1290 / NCIMB 6125 / NCTC 8237 / Type A).